The chain runs to 166 residues: NADH-quinone oxidoreductase subunit C (166 aa).

It belongs to the complex I 30 kDa subunit family. NDH-1 is composed of 14 different subunits. Subunits NuoB, C, D, E, F, and G constitute the peripheral sector of the complex.

It is found in the cell inner membrane. It carries out the reaction a quinone + NADH + 5 H(+)(in) = a quinol + NAD(+) + 4 H(+)(out). Its function is as follows. NDH-1 shuttles electrons from NADH, via FMN and iron-sulfur (Fe-S) centers, to quinones in the respiratory chain. The immediate electron acceptor for the enzyme in this species is believed to be a menaquinone. Couples the redox reaction to proton translocation (for every two electrons transferred, four hydrogen ions are translocated across the cytoplasmic membrane), and thus conserves the redox energy in a proton gradient. This chain is NADH-quinone oxidoreductase subunit C, found in Chlorobium phaeobacteroides (strain DSM 266 / SMG 266 / 2430).